A 294-amino-acid chain; its full sequence is tRNA dimethylallyltransferase (294 aa).

9–16 contributes to the ATP binding site; it reads GATATGKS. 11–16 contacts substrate; sequence TATGKS. An interaction with substrate tRNA region spans residues 34 to 37; that stretch reads DSRQ.

This sequence belongs to the IPP transferase family. Monomer. Mg(2+) serves as cofactor.

The enzyme catalyses adenosine(37) in tRNA + dimethylallyl diphosphate = N(6)-dimethylallyladenosine(37) in tRNA + diphosphate. In terms of biological role, catalyzes the transfer of a dimethylallyl group onto the adenine at position 37 in tRNAs that read codons beginning with uridine, leading to the formation of N6-(dimethylallyl)adenosine (i(6)A). The protein is tRNA dimethylallyltransferase of Trichormus variabilis (strain ATCC 29413 / PCC 7937) (Anabaena variabilis).